A 467-amino-acid chain; its full sequence is Glutamate--tRNA ligase (467 aa).

The 'HIGH' region motif lies at 10 to 20 (PSPTGHLHIGG). 4 residues coordinate Zn(2+): C99, C101, C126, and E128. The 'KMSKS' region signature appears at 236-240 (RLSKR). An ATP-binding site is contributed by K239.

Belongs to the class-I aminoacyl-tRNA synthetase family. Glutamate--tRNA ligase type 1 subfamily. In terms of assembly, monomer. The cofactor is Zn(2+).

The protein resides in the cytoplasm. The catalysed reaction is tRNA(Glu) + L-glutamate + ATP = L-glutamyl-tRNA(Glu) + AMP + diphosphate. Its function is as follows. Catalyzes the attachment of glutamate to tRNA(Glu) in a two-step reaction: glutamate is first activated by ATP to form Glu-AMP and then transferred to the acceptor end of tRNA(Glu). The polypeptide is Glutamate--tRNA ligase (Desulfosudis oleivorans (strain DSM 6200 / JCM 39069 / Hxd3) (Desulfococcus oleovorans)).